A 460-amino-acid polypeptide reads, in one-letter code: uncharacterized protein (460 aa).

The TRAM domain maps to 5-63 (TWHQGELIEVAIADLSDTGDGVGRFAERVVFVPDTVPGDRVLVRLLHVKPNYAHGKLHQ). Residues Cys76, Cys82, Cys85, and Cys164 each contribute to the [4Fe-4S] cluster site. S-adenosyl-L-methionine-binding residues include Gln288, Tyr317, Glu338, and Asp383. Cys410 serves as the catalytic Nucleophile.

It belongs to the class I-like SAM-binding methyltransferase superfamily. RNA M5U methyltransferase family.

This is an uncharacterized protein from Nostoc sp. (strain PCC 7120 / SAG 25.82 / UTEX 2576).